Here is a 689-residue protein sequence, read N- to C-terminus: Glycine--tRNA ligase beta subunit (689 aa).

Belongs to the class-II aminoacyl-tRNA synthetase family. Tetramer of two alpha and two beta subunits.

It localises to the cytoplasm. The enzyme catalyses tRNA(Gly) + glycine + ATP = glycyl-tRNA(Gly) + AMP + diphosphate. The chain is Glycine--tRNA ligase beta subunit from Erwinia tasmaniensis (strain DSM 17950 / CFBP 7177 / CIP 109463 / NCPPB 4357 / Et1/99).